Consider the following 239-residue polypeptide: mRNA turnover protein 4 homolog (239 aa).

Residues 216-239 (QQMDDDLPESAPESEGESEEEDDS) form a disordered region. Over residues 218-239 (MDDDLPESAPESEGESEEEDDS) the composition is skewed to acidic residues. Phosphoserine occurs at positions 225, 229, and 233.

The protein belongs to the universal ribosomal protein uL10 family. In terms of assembly, associates with the pre-60S ribosomal particle. Interacts with MINAS-60 (product of an alternative open reading frame of RBM10).

The protein resides in the nucleus. The protein localises to the nucleolus. It is found in the cytoplasm. Component of the ribosome assembly machinery. Nuclear paralog of the ribosomal protein P0, it binds pre-60S subunits at an early stage of assembly in the nucleolus, and is replaced by P0 in cytoplasmic pre-60S subunits and mature 80S ribosomes. This is mRNA turnover protein 4 homolog (Mrto4) from Mus musculus (Mouse).